Reading from the N-terminus, the 132-residue chain is Small ribosomal subunit protein uS12 (132 aa).

At Asp-89 the chain carries 3-methylthioaspartic acid. The tract at residues 101-132 (TLDASGAAGPSSTNKATRNRKRSKYGVKRPKA) is disordered. Residues 117 to 132 (TRNRKRSKYGVKRPKA) show a composition bias toward basic residues.

The protein belongs to the universal ribosomal protein uS12 family. In terms of assembly, part of the 30S ribosomal subunit. Contacts proteins S8 and S17. May interact with IF1 in the 30S initiation complex.

With S4 and S5 plays an important role in translational accuracy. Its function is as follows. Interacts with and stabilizes bases of the 16S rRNA that are involved in tRNA selection in the A site and with the mRNA backbone. Located at the interface of the 30S and 50S subunits, it traverses the body of the 30S subunit contacting proteins on the other side and probably holding the rRNA structure together. The combined cluster of proteins S8, S12 and S17 appears to hold together the shoulder and platform of the 30S subunit. The protein is Small ribosomal subunit protein uS12 of Sorangium cellulosum (strain So ce56) (Polyangium cellulosum (strain So ce56)).